The sequence spans 160 residues: Cytochrome b6-f complex subunit 4 (160 aa).

Helical transmembrane passes span 36 to 56, 95 to 115, and 131 to 151; these read LLYVFPVVIMGTIGLVVGLAV, LLGIACQAAIPLGLMLIPFIE, and TFFMIGTLVTLWLGAGAIFPI.

It belongs to the cytochrome b family. PetD subfamily. In terms of assembly, the 4 large subunits of the cytochrome b6-f complex are cytochrome b6, subunit IV (17 kDa polypeptide, PetD), cytochrome f and the Rieske protein, while the 4 small subunits are PetG, PetL, PetM and PetN. The complex functions as a dimer.

The protein localises to the cellular thylakoid membrane. Functionally, component of the cytochrome b6-f complex, which mediates electron transfer between photosystem II (PSII) and photosystem I (PSI), cyclic electron flow around PSI, and state transitions. In Gloeothece citriformis (strain PCC 7424) (Cyanothece sp. (strain PCC 7424)), this protein is Cytochrome b6-f complex subunit 4.